The sequence spans 230 residues: Heptaprenylglyceryl phosphate synthase (230 aa).

Lys12 lines the sn-glycerol 1-phosphate pocket. Asp14 and Thr40 together coordinate Mg(2+). Sn-glycerol 1-phosphate-binding positions include 159–164 (YVEYSG), Gly189, and 209–210 (GD).

Belongs to the GGGP/HepGP synthase family. Group I subfamily. Homodimer. Mg(2+) is required as a cofactor.

It carries out the reaction sn-glycerol 1-phosphate + all-trans-heptaprenyl diphosphate = 3-heptaprenyl-sn-glycero-1-phosphate + diphosphate. Its pathway is membrane lipid metabolism; glycerophospholipid metabolism. Prenyltransferase that catalyzes in vivo the transfer of the heptaprenyl moiety of heptaprenyl pyrophosphate (HepPP; 35 carbon atoms) to the C3 hydroxyl of sn-glycerol-1-phosphate (G1P), producing heptaprenylglyceryl phosphate (HepGP). This reaction is an ether-bond-formation step in the biosynthesis of archaea-type G1P-based membrane lipids found in Bacillales. The protein is Heptaprenylglyceryl phosphate synthase of Staphylococcus epidermidis (strain ATCC 35984 / DSM 28319 / BCRC 17069 / CCUG 31568 / BM 3577 / RP62A).